We begin with the raw amino-acid sequence, 179 residues long: Large ribosomal subunit protein uL5 (179 aa).

Belongs to the universal ribosomal protein uL5 family. As to quaternary structure, part of the 50S ribosomal subunit; part of the 5S rRNA/L5/L18/L25 subcomplex. Contacts the 5S rRNA and the P site tRNA. Forms a bridge to the 30S subunit in the 70S ribosome.

In terms of biological role, this is one of the proteins that bind and probably mediate the attachment of the 5S RNA into the large ribosomal subunit, where it forms part of the central protuberance. In the 70S ribosome it contacts protein S13 of the 30S subunit (bridge B1b), connecting the 2 subunits; this bridge is implicated in subunit movement. Contacts the P site tRNA; the 5S rRNA and some of its associated proteins might help stabilize positioning of ribosome-bound tRNAs. The sequence is that of Large ribosomal subunit protein uL5 from Oceanobacillus iheyensis (strain DSM 14371 / CIP 107618 / JCM 11309 / KCTC 3954 / HTE831).